Consider the following 189-residue polypeptide: MVKVIASSLRKGNVVDIDDKLYVVLTAENIHPGKGTPVTQLDMRRISDGVKISERYRTTEQVERAFVEDRPHTFLYEDSDGYTFMNPENFDQVIVTKDVMGDSAVYLQEGMECMLSTHNGVPIAIELPARVTLEIVDTEPTVKGQTASSSYKPAKLSNGVRTMVPPHISAGTRVVIMTADNSYVERAKD.

This sequence belongs to the elongation factor P family.

The protein localises to the cytoplasm. The protein operates within protein biosynthesis; polypeptide chain elongation. Its function is as follows. Involved in peptide bond synthesis. Stimulates efficient translation and peptide-bond synthesis on native or reconstituted 70S ribosomes in vitro. Probably functions indirectly by altering the affinity of the ribosome for aminoacyl-tRNA, thus increasing their reactivity as acceptors for peptidyl transferase. In Xanthobacter autotrophicus (strain ATCC BAA-1158 / Py2), this protein is Elongation factor P.